The chain runs to 248 residues: DNA repair protein RecO (248 aa).

The protein belongs to the RecO family.

Its function is as follows. Involved in DNA repair and RecF pathway recombination. The chain is DNA repair protein RecO from Streptomyces avermitilis (strain ATCC 31267 / DSM 46492 / JCM 5070 / NBRC 14893 / NCIMB 12804 / NRRL 8165 / MA-4680).